The sequence spans 449 residues: MFEEKLSTDNNIRRIFIETYGCQMNIADSEIVIAIVQMDGFEYTENILEADVVLINTCSVRENAEKKIFSRLQYFQSLKKKRNQLIIGVLGCMAKRIRETLIQQYHVDLVVGPDSYMDLPHLIGTVEKGAKAININLSSTEVYKGIVPLKLSRIKISGFISIIRGCNNFCSYCIVPYTRGRERSRDPKSILNELHILKEQGYKEVILLGQNVNSYFYKNENITDFPHLLELVALNAPEMRIRFTTSHPKDMGDETLRVIAKYNNICKHIHLPIQSGSSKILRAMNRKYTREWYLQRVTSIRKIVPEVSISTDLFCGFPSETEEDHKKTLSLMKEVGFDSAFMFKYSERPETYASRYLPDNVPEEVKIRRLNEIITLQLKISLMKNKENIGKTMEILIEGFSKRSREQLFGRTLQNKIVLFPRKNYHIGEKVLVEIKKASAATLFGDPKL.

In terms of domain architecture, MTTase N-terminal spans 13–128; sequence RRIFIETYGC…LPHLIGTVEK (116 aa). The [4Fe-4S] cluster site is built by Cys22, Cys58, Cys92, Cys166, Cys170, and Cys173. The Radical SAM core domain occupies 152–383; sequence SRIKISGFIS…ITLQLKISLM (232 aa). Residues 386–449 enclose the TRAM domain; it reads KENIGKTMEI…AATLFGDPKL (64 aa).

It belongs to the methylthiotransferase family. MiaB subfamily. As to quaternary structure, monomer. Requires [4Fe-4S] cluster as cofactor.

The protein resides in the cytoplasm. The enzyme catalyses N(6)-dimethylallyladenosine(37) in tRNA + (sulfur carrier)-SH + AH2 + 2 S-adenosyl-L-methionine = 2-methylsulfanyl-N(6)-dimethylallyladenosine(37) in tRNA + (sulfur carrier)-H + 5'-deoxyadenosine + L-methionine + A + S-adenosyl-L-homocysteine + 2 H(+). Functionally, catalyzes the methylthiolation of N6-(dimethylallyl)adenosine (i(6)A), leading to the formation of 2-methylthio-N6-(dimethylallyl)adenosine (ms(2)i(6)A) at position 37 in tRNAs that read codons beginning with uridine. The polypeptide is tRNA-2-methylthio-N(6)-dimethylallyladenosine synthase (Azobacteroides pseudotrichonymphae genomovar. CFP2).